A 96-amino-acid polypeptide reads, in one-letter code: Putative pterin-4-alpha-carbinolamine dehydratase (96 aa).

Belongs to the pterin-4-alpha-carbinolamine dehydratase family.

The catalysed reaction is (4aS,6R)-4a-hydroxy-L-erythro-5,6,7,8-tetrahydrobiopterin = (6R)-L-erythro-6,7-dihydrobiopterin + H2O. The polypeptide is Putative pterin-4-alpha-carbinolamine dehydratase (Prochlorococcus marinus (strain MIT 9313)).